The following is a 691-amino-acid chain: Heat shock factor protein (691 aa).

A disordered region spans residues 1–31 (MSRSRSSAKAVQFKHESEEEEEDEEEQLPSR). A compositionally biased stretch (acidic residues) spans 18–27 (EEEEEDEEEQ). A DNA-binding region spans residues 46 to 150 (VPAFLAKLWR…LLDQIKRKIS (105 aa)). Position 256 is a phosphoserine (S256). Residue T258 is modified to Phosphothreonine. Phosphoserine is present on residues S260, S283, S299, and S580. Residues 288–307 (TAASHYDQESVSPPAVERPR) form a disordered region. Residues 658-691 (SDILDTDDGNNDQEASRRQMQTQSSVLNTPRHEL) are disordered. Residues 659–668 (DILDTDDGNN) show a composition bias toward acidic residues. The span at 675–685 (RQMQTQSSVLN) shows a compositional bias: polar residues.

It belongs to the HSF family. In terms of assembly, homotrimer. Exhibits temperature-dependent phosphorylation.

It is found in the nucleus. Functionally, DNA-binding protein that specifically binds heat shock promoter elements (HSE) and activates transcription. In higher eukaryotes, HSF is unable to bind to the HSE unless the cells are heat shocked. The sequence is that of Heat shock factor protein (Hsf) from Drosophila melanogaster (Fruit fly).